We begin with the raw amino-acid sequence, 64 residues long: Large ribosomal subunit protein bL35 (64 aa).

A compositionally biased stretch (polar residues) spans 1-10 (MPKMKTNSAA). Positions 1-64 (MPKMKTNSAA…AKKLHQLLQK (64 aa)) are disordered. The span at 54-64 (QAKKLHQLLQK) shows a compositional bias: basic residues.

Belongs to the bacterial ribosomal protein bL35 family.

The protein is Large ribosomal subunit protein bL35 of Bifidobacterium longum (strain NCC 2705).